The following is a 397-amino-acid chain: Subtilisin-like protease 3 (397 aa).

Positions methionine 1 to alanine 19 are cleaved as a signal peptide. A propeptide spanning residues arginine 20–alanine 116 is cleaved from the precursor. Residues serine 35 to alanine 116 form the Inhibitor I9 domain. Residues threonine 126–glutamine 397 form the Peptidase S8 domain. Active-site charge relay system residues include aspartate 158 and histidine 189. N-linked (GlcNAc...) asparagine glycosylation is present at asparagine 250. The Charge relay system role is filled by serine 344. N-linked (GlcNAc...) asparagine glycosylation occurs at asparagine 393.

It belongs to the peptidase S8 family.

The protein localises to the secreted. Functionally, secreted subtilisin-like serine protease with keratinolytic activity that contributes to pathogenicity. The sequence is that of Subtilisin-like protease 3 (SUB3) from Trichophyton equinum (Horse ringworm fungus).